We begin with the raw amino-acid sequence, 355 residues long: 1D-myo-inositol 2-acetamido-2-deoxy-alpha-D-glucopyranoside deacetylase 3 (355 aa).

Histidine 31, aspartate 34, and histidine 169 together coordinate Zn(2+).

The protein belongs to the MshB deacetylase family. Zn(2+) is required as a cofactor.

It carries out the reaction 1D-myo-inositol 2-acetamido-2-deoxy-alpha-D-glucopyranoside + H2O = 1D-myo-inositol 2-amino-2-deoxy-alpha-D-glucopyranoside + acetate. Its function is as follows. Catalyzes the deacetylation of 1D-myo-inositol 2-acetamido-2-deoxy-alpha-D-glucopyranoside (GlcNAc-Ins) in the mycothiol biosynthesis pathway. In Catenulispora acidiphila (strain DSM 44928 / JCM 14897 / NBRC 102108 / NRRL B-24433 / ID139908), this protein is 1D-myo-inositol 2-acetamido-2-deoxy-alpha-D-glucopyranoside deacetylase 3.